A 197-amino-acid polypeptide reads, in one-letter code: Probable GTP-binding protein EngB (197 aa).

One can recognise an EngB-type G domain in the interval 22 to 197 (TGVEVAFAGR…FKEKLDTWYQ (176 aa)). GTP-binding positions include 30–37 (GRSNAGKS), 57–61 (GRTQL), 75–78 (DLPG), 142–145 (TKAD), and 177–179 (FSS). Residues S37 and T59 each contribute to the Mg(2+) site.

It belongs to the TRAFAC class TrmE-Era-EngA-EngB-Septin-like GTPase superfamily. EngB GTPase family. It depends on Mg(2+) as a cofactor.

In terms of biological role, necessary for normal cell division and for the maintenance of normal septation. In Francisella tularensis subsp. holarctica (strain FTNF002-00 / FTA), this protein is Probable GTP-binding protein EngB.